A 152-amino-acid chain; its full sequence is 3-hydroxyacyl-[acyl-carrier-protein] dehydratase FabZ (152 aa).

Residue His-58 is part of the active site.

Belongs to the thioester dehydratase family. FabZ subfamily.

Its subcellular location is the cytoplasm. It catalyses the reaction a (3R)-hydroxyacyl-[ACP] = a (2E)-enoyl-[ACP] + H2O. Functionally, involved in unsaturated fatty acids biosynthesis. Catalyzes the dehydration of short chain beta-hydroxyacyl-ACPs and long chain saturated and unsaturated beta-hydroxyacyl-ACPs. This is 3-hydroxyacyl-[acyl-carrier-protein] dehydratase FabZ from Prochlorococcus marinus (strain MIT 9312).